Reading from the N-terminus, the 503-residue chain is Guanosine-5'-triphosphate,3'-diphosphate pyrophosphatase (503 aa).

This sequence belongs to the GppA/Ppx family. GppA subfamily.

The enzyme catalyses guanosine 3'-diphosphate 5'-triphosphate + H2O = guanosine 3',5'-bis(diphosphate) + phosphate + H(+). It functions in the pathway purine metabolism; ppGpp biosynthesis; ppGpp from GTP: step 2/2. In terms of biological role, catalyzes the conversion of pppGpp to ppGpp. Guanosine pentaphosphate (pppGpp) is a cytoplasmic signaling molecule which together with ppGpp controls the 'stringent response', an adaptive process that allows bacteria to respond to amino acid starvation, resulting in the coordinated regulation of numerous cellular activities. The sequence is that of Guanosine-5'-triphosphate,3'-diphosphate pyrophosphatase from Pseudoalteromonas atlantica (strain T6c / ATCC BAA-1087).